The following is a 388-amino-acid chain: Deoxyuridine 5'-triphosphate nucleotidohydrolase (388 aa).

A compositionally biased stretch (basic and acidic residues) spans 77 to 88 (EEKYDKEQHPGE). Disordered stretches follow at residues 77–96 (EEKYDKEQHPGEDEASSPLP) and 336–388 (THTP…PRHP). Positions 351-363 (VDDDVDETEEDEK) are enriched in acidic residues.

This sequence belongs to the dUTPase family. Mg(2+) is required as a cofactor.

Its subcellular location is the virion. The catalysed reaction is dUTP + H2O = dUMP + diphosphate + H(+). The protein operates within pyrimidine metabolism; dUMP biosynthesis; dUMP from dCTP (dUTP route): step 2/2. Functionally, involved in nucleotide metabolism: produces dUMP, the immediate precursor of thymidine nucleotides and decreases the intracellular concentration of dUTP to avoid uracil incorporation into viral DNA. The sequence is that of Deoxyuridine 5'-triphosphate nucleotidohydrolase from Human cytomegalovirus (strain AD169) (HHV-5).